The sequence spans 937 residues: Ubiquitin carboxyl-terminal hydrolase 37 (937 aa).

A KEN box 1 motif is present at residues 38-40 (RDN). 2 consecutive short sequence motifs (D-box) follow at residues 76-84 (RMTLTLKDS) and 101-110 (KEYLETVKLG). The span at 132 to 149 (TAQNDSGLSPSDKQSAPR) shows a compositional bias: polar residues. 2 disordered regions span residues 132 to 216 (TAQN…KAIT) and 232 to 258 (QSEE…SRTG). The span at 151–161 (SSLDSREDSTP) shows a compositional bias: basic and acidic residues. A D-box 3 motif is present at residues 162–170 (RKPLGSPSR). Positions 204–206 (KEN) match the KEN box 2 motif. Residues 322 to 911 (QGFSNLGNTC…SGYIFFYMHK (590 aa)) enclose the USP domain. The active-site Nucleophile is Cys-331. Positions 609 to 625 (NSSTLRRASQRPESSGS) are enriched in polar residues. Disordered stretches follow at residues 609 to 632 (NSST…DSDS) and 688 to 710 (TSLC…GDAD). The UIM 1 domain occupies 672 to 691 (NDEEMLAAVLEMSRHDTSLC). The KEN box 3 signature appears at 742–744 (KEN). UIM domains are found at residues 766 to 785 (REEQ…QEAR) and 788 to 807 (REDD…FNNS). Residue His-866 is the Proton acceptor of the active site.

This sequence belongs to the peptidase C19 family.

The catalysed reaction is Thiol-dependent hydrolysis of ester, thioester, amide, peptide and isopeptide bonds formed by the C-terminal Gly of ubiquitin (a 76-residue protein attached to proteins as an intracellular targeting signal).. In terms of biological role, deubiquitinase that antagonizes the anaphase-promoting complex (APC/C) during G1/S transition by mediating deubiquitination of APC/C target proteins, thereby promoting S phase entry. Specifically mediates deubiquitination of 'Lys-11'-linked polyubiquitin chains, a specific ubiquitin-linkage type mediated by the APC/C complex. In Danio rerio (Zebrafish), this protein is Ubiquitin carboxyl-terminal hydrolase 37 (usp37).